We begin with the raw amino-acid sequence, 122 residues long: Ribosome-binding factor A (122 aa).

Belongs to the RbfA family. As to quaternary structure, monomer. Binds 30S ribosomal subunits, but not 50S ribosomal subunits or 70S ribosomes.

The protein resides in the cytoplasm. In terms of biological role, one of several proteins that assist in the late maturation steps of the functional core of the 30S ribosomal subunit. Associates with free 30S ribosomal subunits (but not with 30S subunits that are part of 70S ribosomes or polysomes). Required for efficient processing of 16S rRNA. May interact with the 5'-terminal helix region of 16S rRNA. The polypeptide is Ribosome-binding factor A (Prosthecochloris aestuarii (strain DSM 271 / SK 413)).